The sequence spans 514 residues: Coiled-coil domain-containing protein 174 (514 aa).

Disordered stretches follow at residues 42–83 (AKPK…DQSR) and 137–162 (TLEKETDDEEIEPEMEIPPPEDPDEE). Basic and acidic residues predominate over residues 63 to 83 (KRAEKDIEQKAEEDQTLDQSR). A coiled-coil region spans residues 66 to 98 (EKDIEQKAEEDQTLDQSRKKLEEKAKLYEKMTK). Over residues 141 to 162 (ETDDEEIEPEMEIPPPEDPDEE) the composition is skewed to acidic residues. 2 coiled-coil regions span residues 203–227 (LLSEDMKRELQRQQWEKEEEEALRK) and 266–321 (LDML…LENG). Disordered stretches follow at residues 270–291 (REQTLDQRTKREQLKEKRKAAL) and 306–490 (LREE…PSAH). Composition is skewed to basic and acidic residues over residues 335–354 (EVPRPSRKVEVVIQERRDTK) and 376–388 (KKQEELRDERDPE). A compositionally biased stretch (polar residues) spans 405-418 (YSSQNLNSPETSPG). Positions 420–429 (TEPEISENQK) are enriched in basic and acidic residues.

The protein localises to the nucleus. Functionally, probably involved in neuronal development. The polypeptide is Coiled-coil domain-containing protein 174 (CCDC174) (Gallus gallus (Chicken)).